Here is a 101-residue protein sequence, read N- to C-terminus: NAD(P)H-quinone oxidoreductase subunit 4L, chloroplastic (101 aa).

The next 3 helical transmembrane spans lie at 2 to 22 (MLEHVLVLSAYLFSVGLYGLI), 32 to 52 (MCLELILNAVNINFVTFSDFF), and 61 to 81 (IFSIFVIAIAAAEAAIGLAIV).

This sequence belongs to the complex I subunit 4L family. In terms of assembly, NDH is composed of at least 16 different subunits, 5 of which are encoded in the nucleus.

It localises to the plastid. It is found in the chloroplast thylakoid membrane. The catalysed reaction is a plastoquinone + NADH + (n+1) H(+)(in) = a plastoquinol + NAD(+) + n H(+)(out). It carries out the reaction a plastoquinone + NADPH + (n+1) H(+)(in) = a plastoquinol + NADP(+) + n H(+)(out). Functionally, NDH shuttles electrons from NAD(P)H:plastoquinone, via FMN and iron-sulfur (Fe-S) centers, to quinones in the photosynthetic chain and possibly in a chloroplast respiratory chain. The immediate electron acceptor for the enzyme in this species is believed to be plastoquinone. Couples the redox reaction to proton translocation, and thus conserves the redox energy in a proton gradient. The chain is NAD(P)H-quinone oxidoreductase subunit 4L, chloroplastic from Panax ginseng (Korean ginseng).